Reading from the N-terminus, the 237-residue chain is Phosphoadenosine 5'-phosphosulfate reductase (237 aa).

Cys231 acts as the Nucleophile; cysteine thiosulfonate intermediate in catalysis.

The protein belongs to the PAPS reductase family. CysH subfamily.

The protein resides in the cytoplasm. It carries out the reaction [thioredoxin]-disulfide + sulfite + adenosine 3',5'-bisphosphate + 2 H(+) = [thioredoxin]-dithiol + 3'-phosphoadenylyl sulfate. It participates in sulfur metabolism; hydrogen sulfide biosynthesis; sulfite from sulfate: step 3/3. Catalyzes the formation of sulfite from phosphoadenosine 5'-phosphosulfate (PAPS) using thioredoxin as an electron donor. The protein is Phosphoadenosine 5'-phosphosulfate reductase of Xylella fastidiosa (strain M23).